The sequence spans 270 residues: Shikimate dehydrogenase (NADP(+)) (270 aa).

Shikimate is bound by residues 14 to 16 (SKS) and Thr-61. The active-site Proton acceptor is the Lys-65. Residues Asn-86 and Asp-101 each contribute to the shikimate site. NADP(+) is bound by residues 126–130 (GAGGA), 150–155 (NRTVDK), and Met-215. Residue Tyr-217 coordinates shikimate. Gly-238 is a binding site for NADP(+).

It belongs to the shikimate dehydrogenase family. In terms of assembly, homodimer.

The catalysed reaction is shikimate + NADP(+) = 3-dehydroshikimate + NADPH + H(+). It participates in metabolic intermediate biosynthesis; chorismate biosynthesis; chorismate from D-erythrose 4-phosphate and phosphoenolpyruvate: step 4/7. Its function is as follows. Involved in the biosynthesis of the chorismate, which leads to the biosynthesis of aromatic amino acids. Catalyzes the reversible NADPH linked reduction of 3-dehydroshikimate (DHSA) to yield shikimate (SA). The sequence is that of Shikimate dehydrogenase (NADP(+)) from Methylobacillus flagellatus (strain ATCC 51484 / DSM 6875 / VKM B-1610 / KT).